Here is an 812-residue protein sequence, read N- to C-terminus: Mitochondrial intermediate peptidase (812 aa).

The transit peptide at 1 to 35 (MLKLLRPRPWVCNSCLNRVAFPKPYPVGSRSTRWL) directs the protein to the mitochondrion. A disordered region spans residues 518–544 (STSEGGPAFGSPESAANDGMAASRGAS). H587 contacts Zn(2+). Residue E588 is part of the active site. The Zn(2+) site is built by H591 and H594.

The protein belongs to the peptidase M3 family. Requires Zn(2+) as cofactor.

The protein resides in the mitochondrion matrix. The enzyme catalyses Release of an N-terminal octapeptide as second stage of processing of some proteins imported into the mitochondrion.. Cleaves proteins, imported into the mitochondrion, to their mature size. While most mitochondrial precursor proteins are processed to the mature form in one step by mitochondrial processing peptidase (MPP), the sequential cleavage by MIP of an octapeptide after initial processing by MPP is a required step for a subgroup of nuclear-encoded precursor proteins destined for the matrix or the inner membrane. The chain is Mitochondrial intermediate peptidase (OCT1) from Pyricularia oryzae (strain 70-15 / ATCC MYA-4617 / FGSC 8958) (Rice blast fungus).